Reading from the N-terminus, the 140-residue chain is Lipoprotein MlpG (140 aa).

The first 17 residues, 1 to 17 (MKIINILFCLFLLMLNG), serve as a signal peptide directing secretion. Cys18 carries N-palmitoyl cysteine lipidation. Cys18 is lipidated: S-diacylglycerol cysteine. Positions 22–57 (DTNTKQTKSRQKRDLTQKEATQEKPKSKSKEDLLRE) are disordered. Basic and acidic residues predominate over residues 33–57 (KRDLTQKEATQEKPKSKSKEDLLRE).

The protein belongs to the Multicopy lipoprotein (Mlp) family.

The protein resides in the cell outer membrane. Functionally, an outer membrane protein that may participate in pathogenesis. Some human Lyme disease patients have antibodies against this protein. The Mlp proteins probably undergo intragenic recombination, generating new alleles. The protein is Lipoprotein MlpG of Borreliella burgdorferi (strain ATCC 35210 / DSM 4680 / CIP 102532 / B31) (Borrelia burgdorferi).